The chain runs to 117 residues: MTRIRRGYIARRRRTKMRLFVSSFRGAHSRLSRTITQQKIRALVSAHRDRDRKKRDFRRLWITRINAVIRGNLVSYSYSRLIYNLYKAQLVLNRKILAQIAISNRNCLYMISNEIIK.

The protein belongs to the bacterial ribosomal protein bL20 family.

It localises to the plastid. The protein localises to the chloroplast. Its function is as follows. Binds directly to 23S ribosomal RNA and is necessary for the in vitro assembly process of the 50S ribosomal subunit. It is not involved in the protein synthesizing functions of that subunit. This chain is Large ribosomal subunit protein bL20c, found in Citrus sinensis (Sweet orange).